The sequence spans 238 residues: Urease subunit alpha (238 aa).

The tract at residues 1–102 (MKLTPKELDK…LVTVHTPIES (102 aa)) is urease gamma. The tract at residues 103–238 (KGKLVPGELF…DDNYVKTIKE (136 aa)) is urease beta.

This sequence in the N-terminal section; belongs to the urease gamma subunit family. It in the C-terminal section; belongs to the urease beta subunit family. As to quaternary structure, heterohexamer of 3 UreA (alpha) and 3 UreB (beta) subunits.

The protein resides in the cytoplasm. The enzyme catalyses urea + 2 H2O + H(+) = hydrogencarbonate + 2 NH4(+). Its pathway is nitrogen metabolism; urea degradation; CO(2) and NH(3) from urea (urease route): step 1/1. In Helicobacter acinonychis (strain Sheeba), this protein is Urease subunit alpha.